The primary structure comprises 177 residues: MLDAFSRVVTNADAKAAYVGGADLQALKKFISEGNKRLDAVNSVVSNASCIVSDAVSGMICENPSLISPSGNCYTNRRMAACLRDGEIILRYVSYALLSGDSSVLEDRCLNGLKETYSSLGVPANSNARAVSIMKACAVAFINNTASQRKLSTPQGDCSGLASECASYFDKVTAAIS.

The (2R,3E)-phycoerythrobilin site is built by Cys50 and Cys61. Asn72 bears the N4-methylasparagine mark. Positions 82 and 158 each coordinate (2R,3E)-phycoerythrobilin.

The protein belongs to the phycobiliprotein family. Heterotetramer of one alpha-1, one alpha-2, and two beta chains. Post-translationally, contains three covalently linked bilin chromophores.

The protein localises to the plastid. It is found in the chloroplast thylakoid membrane. In terms of biological role, light-harvesting photosynthetic bile pigment-protein from the phycobiliprotein complex. The chain is B-phycoerythrin beta chain (cpeB) from Guillardia theta (Cryptophyte).